Here is a 102-residue protein sequence, read N- to C-terminus: Envelope glycoprotein N (102 aa).

The signal sequence occupies residues 1–32; that stretch reads MGKVLRKPFAKAVPLLFLAATWLLTGVLPAGA. Over 33–69 the chain is Virion surface; that stretch reads SSPTNAAAASLTEAQDQFYSYTCNADTFSPSLTSFAS. A helical transmembrane segment spans residues 70–90; that stretch reads IWALLTLVLVIIASAIYLMYV. Residues 91–102 lie on the Intravirion side of the membrane; that stretch reads CFNKFVNTLLTD.

The protein belongs to the herpesviridae glycoprotein N family. Interacts (via N-terminus) with gM (via N-terminus). The gM-gN heterodimer forms the gCII complex. Post-translationally, O-glycosylated. Contains alpha 2,6-sialic acid residues.

The protein localises to the virion membrane. Its subcellular location is the host membrane. It localises to the host Golgi apparatus. It is found in the host trans-Golgi network. Functionally, envelope glycoprotein necessary for proper maturation of gM and modulation of its membrane fusion activity. Also plays a critical role in virion morphogenesis. The protein is Envelope glycoprotein N of Epstein-Barr virus (strain AG876) (HHV-4).